The following is a 206-amino-acid chain: Small ribosomal subunit protein uS4 (206 aa).

Residues 96–156 (CRLDNVVYRM…EKAKNQLRIV (61 aa)) form the S4 RNA-binding domain.

The protein belongs to the universal ribosomal protein uS4 family. Part of the 30S ribosomal subunit. Contacts protein S5. The interaction surface between S4 and S5 is involved in control of translational fidelity.

Its function is as follows. One of the primary rRNA binding proteins, it binds directly to 16S rRNA where it nucleates assembly of the body of the 30S subunit. With S5 and S12 plays an important role in translational accuracy. The protein is Small ribosomal subunit protein uS4 of Pseudomonas fluorescens (strain ATCC BAA-477 / NRRL B-23932 / Pf-5).